Consider the following 410-residue polypeptide: ORC1-type DNA replication protein 4 (410 aa).

ATP is bound by residues 73 to 77 (TGKSL), tyrosine 220, and arginine 232.

The protein belongs to the CDC6/cdc18 family.

Functionally, involved in regulation of DNA replication. The chain is ORC1-type DNA replication protein 4 (orc4) from Halobacterium salinarum (strain ATCC 700922 / JCM 11081 / NRC-1) (Halobacterium halobium).